Reading from the N-terminus, the 216-residue chain is MAATNGDAELTVAEEAKEEEEATDDGGGGVSSQWLRAAVLGASDGLVSTAALMLGIGAARPADARAVLLSGLAGLVAGACSMAIGEYVSVHVQLDVELADLERRRRRGGPAPAGLGLHAAAAAVSRPGQAAAASALSFAAGAALPLLAAWFVAGAYRVRVVVVVATASLALAAFGAAGARLGRAPGGRAGLRVVVGGLLAMAATYGVMKLFRTHGV.

Residues Met-1 to Gly-29 are disordered. The Cytoplasmic portion of the chain corresponds to Met-1–Arg-36. Residues Ala-37–Gly-57 form a helical membrane-spanning segment. Residues Ala-58–Arg-65 lie on the Vacuolar side of the membrane. A helical membrane pass occupies residues Ala-66–Glu-86. Residues Tyr-87 to Ser-134 are Cytoplasmic-facing. A helical membrane pass occupies residues Ala-135–Ala-155. Residues Tyr-156–Arg-157 are Vacuolar-facing. Residues Val-158–Gly-178 traverse the membrane as a helical segment. The Cytoplasmic segment spans residues Ala-179 to Gly-190. The chain crosses the membrane as a helical span at residues Leu-191–Phe-211. Topologically, residues Arg-212–Val-216 are vacuolar.

This sequence belongs to the CCC1 family.

The protein localises to the vacuole membrane. The catalysed reaction is Fe(2+)(in) = Fe(2+)(out). Its function is as follows. Probable vacuolar iron transporter that may be involved in the regulation of iron distribution throughout the plant. The protein is Vacuolar iron transporter homolog 4 of Oryza sativa subsp. japonica (Rice).